We begin with the raw amino-acid sequence, 443 residues long: Transmembrane protein 184C (443 aa).

The next 7 membrane-spanning stretches (helical) occupy residues 15-35 (LVVL…IWKL), 46-66 (AWFI…WGIL), 84-104 (ILWM…YPDI), 182-202 (PVTT…EGDF), 210-230 (YLVI…VLFY), 252-272 (VVFV…AGVI), and 284-304 (VATG…AVAH). The segment covering 369-378 (TSLLSSSTQD) has biased composition (polar residues). The segment at 369–422 (TSLLSSSTQDPISAASSIPPSPSGHYQGFGQTITPQTTPTATTMPEELYSADSP) is disordered. Residues 399 to 411 (QTITPQTTPTATT) are compositionally biased toward low complexity.

The protein belongs to the TMEM184 family.

The protein localises to the membrane. Its function is as follows. May play a role in cell growth. The protein is Transmembrane protein 184C (tmem184c) of Xenopus tropicalis (Western clawed frog).